Consider the following 514-residue polypeptide: Anthranilate synthase component 1 (514 aa).

L-tryptophan-binding positions include threonine 40 and 290-292 (PYM). 327 to 328 (GT) contributes to the chorismate binding site. Glutamate 360 contributes to the Mg(2+) binding site. Chorismate is bound by residues tyrosine 448, arginine 468, 482-484 (GAG), and glycine 484. A Mg(2+)-binding site is contributed by glutamate 497.

This sequence belongs to the anthranilate synthase component I family. In terms of assembly, heterotetramer consisting of two non-identical subunits: a beta subunit (TrpG) and a large alpha subunit (TrpE). Requires Mg(2+) as cofactor.

The catalysed reaction is chorismate + L-glutamine = anthranilate + pyruvate + L-glutamate + H(+). The protein operates within amino-acid biosynthesis; L-tryptophan biosynthesis; L-tryptophan from chorismate: step 1/5. Feedback inhibited by tryptophan. Functionally, part of a heterotetrameric complex that catalyzes the two-step biosynthesis of anthranilate, an intermediate in the biosynthesis of L-tryptophan. In the first step, the glutamine-binding beta subunit (TrpG) of anthranilate synthase (AS) provides the glutamine amidotransferase activity which generates ammonia as a substrate that, along with chorismate, is used in the second step, catalyzed by the large alpha subunit of AS (TrpE) to produce anthranilate. In the absence of TrpG, TrpE can synthesize anthranilate directly from chorismate and high concentrations of ammonia. This chain is Anthranilate synthase component 1 (trpE), found in Buchnera aphidicola subsp. Rhopalosiphum padi.